We begin with the raw amino-acid sequence, 3431 residues long: KICSTOR complex protein SZT2 (3431 aa).

Disordered regions lie at residues 699-731 (SKEPTPKVKRKGLGGVGGSSPSKSPPTLGPQQA), 1067-1101 (LRDPGPEGPPVGGHAVAKDRAGNSTQASGDSTLPS), and 1162-1231 (KPKL…GADG). The segment at 1082–1188 (VAKDRAGNST…ATGTKATESQ (107 aa)) is mediates interaction with the GATOR1 complex. Polar residues-rich tracts occupy residues 1088-1101 (GNSTQASGDSTLPS) and 1182-1212 (TKATESQVPTLSVTLASDSAQDSGEPSTPSC). Serine 1275 carries the post-translational modification Phosphoserine. The interval 1356–1378 (PPSPGPLSPGPFSSSIEEGPEPR) is disordered. A Phosphoserine modification is found at serine 1415. Disordered regions lie at residues 1512 to 1534 (YRESREPDLGPAGLDSASLSDAD), 1629 to 1678 (PPAS…HPGL), 1806 to 1883 (RAED…PGET), 2113 to 2148 (PPSLALSRSQEPISSEDSVAPRSPLDMASSRSSDAV), 2450 to 2512 (TEAG…LEEG), 2735 to 2756 (ASPPLSREQGRLSGSSRGGGPL), and 2866 to 2899 (ETCAPSEGQRRPCPESGSGSREVPTSCESLDVPP). A Phosphothreonine modification is found at threonine 1640. Over residues 1641–1657 (SESSASFPRSPGQPSSL) the composition is skewed to polar residues. The residue at position 1650 (serine 1650) is a Phosphoserine. Over residues 1832–1854 (PLISLPSLSQGGSQPGPSRGLSL) the composition is skewed to low complexity. Residues 2118–2129 (LSRSQEPISSED) show a composition bias toward polar residues. The segment covering 2460–2473 (TTDDIVLDRPEDTR) has biased composition (basic and acidic residues). Low complexity predominate over residues 2739 to 2749 (LSREQGRLSGS).

As to quaternary structure, part of the KICSTOR complex composed of KPTN, ITFG2, KICS2 and SZT2. SZT2 probably serves as a link between the other three proteins in the KICSTOR complex and may mediate the direct interaction with the GATOR complex via GATOR1. The KICSTOR complex interacts directly with the GATOR1 complex and most probably indirectly with the GATOR2 complex in an amino acid-independent manner. Mostly expressed in brain, spinal cord and lung.

The protein resides in the lysosome membrane. Its subcellular location is the peroxisome. In terms of biological role, as part of the KICSTOR complex functions in the amino acid-sensing branch of the TORC1 signaling pathway. Recruits, in an amino acid-independent manner, the GATOR1 complex to the lysosomal membranes and allows its interaction with GATOR2 and the RAG GTPases. Functions upstream of the RAG GTPases and is required to negatively regulate mTORC1 signaling in absence of amino acids. In absence of the KICSTOR complex mTORC1 is constitutively localized to the lysosome and activated. The KICSTOR complex is also probably involved in the regulation of mTORC1 by glucose. May play a role in the cellular response to oxidative stress. The sequence is that of KICSTOR complex protein SZT2 from Mus musculus (Mouse).